Here is a 186-residue protein sequence, read N- to C-terminus: uncharacterized protein (186 aa).

Asn34 carries an N-linked (GlcNAc...) asparagine; by host glycan. Transmembrane regions (helical) follow at residues 47 to 67 (IGMV…ATTF), 114 to 134 (ILET…IVLL), and 144 to 164 (LEMI…TLFF).

It is found in the membrane. This is an uncharacterized protein from Acanthamoeba polyphaga mimivirus (APMV).